The primary structure comprises 1446 residues: Receptor-type tyrosine-protein phosphatase U (1446 aa).

The signal sequence occupies residues 1–18; sequence MARAQALVLALTFQFCAP. Over 19–749 the chain is Extracellular; the sequence is ETETPAAGCT…QRSEEMGLIL (731 aa). The MAM domain occupies 25–188; that stretch reads AGCTFEEASD…ILLFSYPCAK (164 aa). Residue Asn-75 is glycosylated (N-linked (GlcNAc...) asparagine). An Ig-like C2-type domain is found at 190 to 275; the sequence is PHFSRLGDVE…SQAPRGAGVS (86 aa). An intrachain disulfide couples Cys-210 to Cys-264. 4 Fibronectin type-III domains span residues 288 to 383, 386 to 484, 485 to 591, and 592 to 668; these read PIAP…CAEP, APKG…TDED, VPGG…SAPS, and FDYA…FGAE. An N-linked (GlcNAc...) asparagine glycan is attached at Asn-410. N-linked (GlcNAc...) asparagine glycosylation occurs at Asn-685. The helical transmembrane segment at 750–770 threads the bilayer; that stretch reads GICAGGLAVLILLLGAIIVII. The mediates interaction with CTNNB1 stretch occupies residues 771–887; it reads RKGRDRYAYS…DLLQHINQMK (117 aa). Over 771 to 1446 the chain is Cytoplasmic; it reads RKGRDRYAYS…LEYLEALELR (676 aa). The segment at 830–867 is disordered; sequence PGYSPRGDQRSGGVTEASSLLGGSPRRPCGRKGSPYHT. Phosphoserine occurs at positions 848, 853, and 863. Residue Tyr-865 is modified to Phosphotyrosine. Tyrosine-protein phosphatase domains follow at residues 888–1144 and 1176–1439; these read TAEG…ILEA and LREE…ALEY. Residues Glu-1053, 1085 to 1091, and Gln-1129 each bind substrate; that span reads CSAGTGR. Cys-1085 (phosphocysteine intermediate) is an active-site residue. Cys-1380 (phosphocysteine intermediate) is an active-site residue.

This sequence belongs to the protein-tyrosine phosphatase family. Receptor class 2B subfamily. As to quaternary structure, forms homooligomeric complexes which mediate cell homotypic adhesion. Interacts (via the cytoplasmic juxtamembrane domain) with CTNNB1; may mediate interaction with the cadherin/catenin adhesion complex. Interacts with KIT. May interact with AP3B1. In terms of processing, the extracellular domain is proteolytically processed through cleavage within the fibronectin type-III 4 domain. In addition to the 190 kDa full-length protein, proteolytic products of 100 kDa, 80 kDa and 73 kDa are observed. N-glycosylated. Post-translationally, phosphorylated on tyrosine residues upon activation of KIT with stem cell factor (SCF). The 73 kDa proteolytic product is not phosphorylated. Transcripts of different sizes are differentially expressed in a subset of tissues. Detected in brain, lung, skeletal muscle, heart, kidney and placenta. In brain; expressed in olfactory bulb, cerebral cortex, hippocampus and cerebellum.

The protein localises to the cell junction. Its subcellular location is the cell membrane. The enzyme catalyses O-phospho-L-tyrosyl-[protein] + H2O = L-tyrosyl-[protein] + phosphate. Its function is as follows. Tyrosine-protein phosphatase which dephosphorylates CTNNB1. Regulates CTNNB1 function both in cell adhesion and signaling. May function in cell proliferation and migration and play a role in the maintenance of epithelial integrity. May play a role in megakaryocytopoiesis. The protein is Receptor-type tyrosine-protein phosphatase U (Ptpru) of Mus musculus (Mouse).